Here is a 121-residue protein sequence, read N- to C-terminus: Basic phospholipase A2 homolog BaTX (121 aa).

Disulfide bonds link Cys-26–Cys-115, Cys-28–Cys-44, Cys-43–Cys-95, Cys-49–Cys-121, Cys-50–Cys-88, Cys-57–Cys-81, and Cys-75–Cys-86. The tract at residues 105–117 (KKYRYYLKPLCKK) is important for membrane-damaging activities in eukaryotes and bacteria; heparin-binding.

The protein belongs to the phospholipase A2 family. Group II subfamily. K49 sub-subfamily. Homodimer; non-covalently linked. Expressed by the venom gland.

Its subcellular location is the secreted. Snake venom phospholipase A2 homolog that lacks enzymatic activity. Is myotoxic and displays edema-inducing activities. In vitro, produced time-dependent, irreversible neuromuscular blockade in isolated mouse phrenic nerve-diaphragm and chick biventer cervicis preparations. A model of myotoxic mechanism has been proposed: an apo Lys49-PLA2 is activated by the entrance of a hydrophobic molecule (e.g. fatty acid) at the hydrophobic channel of the protein leading to a reorientation of a monomer. This reorientation causes a transition between 'inactive' to 'active' states, causing alignment of C-terminal and membrane-docking sites (MDoS) side-by-side and putting the membrane-disruption sites (MDiS) in the same plane, exposed to solvent and in a symmetric position for both monomers. The MDoS region stabilizes the toxin on membrane by the interaction of charged residues with phospholipid head groups. Subsequently, the MDiS region destabilizes the membrane with penetration of hydrophobic residues. This insertion causes a disorganization of the membrane, allowing an uncontrolled influx of ions (i.e. calcium and sodium), and eventually triggering irreversible intracellular alterations and cell death. The sequence is that of Basic phospholipase A2 homolog BaTX from Bothrops alternatus (Urutu).